A 661-amino-acid polypeptide reads, in one-letter code: Lateral signaling target protein 2 (661 aa).

Residues 294 to 432 (VPEDTSSTLT…SDDEITDDVQ (139 aa)) form a disordered region. A compositionally biased stretch (polar residues) spans 297–310 (DTSSTLTMSDFRTN). Composition is skewed to low complexity over residues 330 to 360 (SDST…SPHS) and 381 to 393 (TNSN…TESP). Residues 394-411 (ETIEEPDNVDMEESSESE) are compositionally biased toward acidic residues. Positions 412-422 (VDTHIDETRNE) are enriched in basic and acidic residues. The segment at 566-626 (DEDCEQCTAC…VCNLCYVHRL (61 aa)) adopts an FYVE-type zinc-finger fold. Zn(2+) is bound by residues C572, C575, C588, C591, C596, C599, C618, and C621. Residues 641–650 (NGATVPSVTE) show a composition bias toward polar residues. The tract at residues 641-661 (NGATVPSVTEQQSAQTASASS) is disordered. Low complexity predominate over residues 651–661 (QQSAQTASASS).

Belongs to the lst-2 family. As to expression, expressed in vulval precursor cells (VPCs).

In terms of biological role, negative regulator of epidermal growth factor receptor (EGFR) signaling. The protein is Lateral signaling target protein 2 (lst-2) of Caenorhabditis elegans.